Consider the following 149-residue polypeptide: Protein SprT-like (149 aa).

Positions 4-143 constitute a SprT-like domain; that stretch reads TDYVKQVSLE…CGLCRGKLLL (140 aa). H64 contributes to the Zn(2+) binding site. E65 is an active-site residue. H68 is a binding site for Zn(2+).

This sequence belongs to the SprT family. Requires Zn(2+) as cofactor.

It localises to the cytoplasm. The polypeptide is Protein SprT-like (Streptococcus pneumoniae (strain JJA)).